We begin with the raw amino-acid sequence, 588 residues long: Adenine deaminase (588 aa).

This sequence belongs to the metallo-dependent hydrolases superfamily. Adenine deaminase family. As to quaternary structure, homodimer. The cofactor is Mn(2+).

The enzyme catalyses adenine + H2O + H(+) = hypoxanthine + NH4(+). This is Adenine deaminase from Escherichia coli O81 (strain ED1a).